Consider the following 519-residue polypeptide: 2,3-bisphosphoglycerate-independent phosphoglycerate mutase (519 aa).

2 residues coordinate Mn(2+): Asp18 and Ser68. Ser68 serves as the catalytic Phosphoserine intermediate. Residues His129, 159 to 160, Arg191, Arg197, 267 to 270, and Lys341 contribute to the substrate site; these read RD and RADR. The Mn(2+) site is built by Asp408, His412, Asp449, His450, and His468.

It belongs to the BPG-independent phosphoglycerate mutase family. Monomer. It depends on Mn(2+) as a cofactor.

The catalysed reaction is (2R)-2-phosphoglycerate = (2R)-3-phosphoglycerate. The protein operates within carbohydrate degradation; glycolysis; pyruvate from D-glyceraldehyde 3-phosphate: step 3/5. Catalyzes the interconversion of 2-phosphoglycerate and 3-phosphoglycerate. This Coxiella burnetii (strain RSA 493 / Nine Mile phase I) protein is 2,3-bisphosphoglycerate-independent phosphoglycerate mutase.